The following is a 210-amino-acid chain: Adenylate kinase (210 aa).

10–15 lines the ATP pocket; it reads GSGKGT. An NMP region spans residues 30–54; sequence SCGDILRKQNKCCDINKLIKKGELI. Residues Arg36, 52-54, 80-83, and Gln87 each bind AMP; these read ELI and GFPR. Residues 117 to 154 form an LID region; sequence GRIIDKVSGEIYHLKFNPPKFITEKSNKNKILVRRLDD. ATP contacts are provided by residues Arg118 and 127-128; that span reads IY. AMP contacts are provided by Arg151 and Arg162. An ATP-binding site is contributed by Phe195.

It belongs to the adenylate kinase family. In terms of assembly, monomer.

The protein localises to the cytoplasm. The enzyme catalyses AMP + ATP = 2 ADP. The protein operates within purine metabolism; AMP biosynthesis via salvage pathway; AMP from ADP: step 1/1. Its function is as follows. Catalyzes the reversible transfer of the terminal phosphate group between ATP and AMP. Plays an important role in cellular energy homeostasis and in adenine nucleotide metabolism. The polypeptide is Adenylate kinase (Wigglesworthia glossinidia brevipalpis).